Consider the following 291-residue polypeptide: Lipase (291 aa).

Positions 1-17 are cleaved as a signal peptide; that stretch reads MRSSLVLFFVSAWTALA. Residues 18–22 constitute a propeptide that is removed on maturation; the sequence is SPIRR. 3 cysteine pairs are disulfide-bonded: Cys44-Cys290, Cys58-Cys63, and Cys126-Cys129. Catalysis depends on Ser168, which acts as the Nucleophile. Residues Asp223 and His280 each act as charge relay system in the active site.

This sequence belongs to the AB hydrolase superfamily. Lipase family.

It carries out the reaction a triacylglycerol + H2O = a diacylglycerol + a fatty acid + H(+). This Thermomyces lanuginosus (Humicola lanuginosa) protein is Lipase (LIP).